The following is a 339-amino-acid chain: N-acetylornithine carbamoyltransferase (339 aa).

Residues 49–52 (SMRT), Trp-77, and Arg-112 contribute to the carbamoyl phosphate site. Glu-144 contacts N(2)-acetyl-L-ornithine. 148 to 151 (HPCQ) lines the carbamoyl phosphate pocket. N(2)-acetyl-L-ornithine contacts are provided by Lys-252 and Leu-295. Residue 294–295 (CL) coordinates carbamoyl phosphate. Lys-302 carries the N6-carboxylysine modification. Arg-322 is a carbamoyl phosphate binding site.

It belongs to the aspartate/ornithine carbamoyltransferase superfamily. AOTCase family. Homotrimer.

It localises to the cytoplasm. It carries out the reaction N(2)-acetyl-L-ornithine + carbamoyl phosphate = N(2)-acetyl-L-citrulline + phosphate + H(+). The protein operates within amino-acid biosynthesis; L-arginine biosynthesis. Its activity is regulated as follows. Carboxylation at Lys-302 increases the catalytic activity of the enzyme. Is potently inhibited by N(alpha)-acetyl-N(delta)-phosphonoacetyl-L-ornithine (PALAO). Catalyzes the transfer of the carbamoyl group from carbamoyl phosphate to the delta-amino group of N(2)-acetyl-L-ornithine to produce N(2)-acetyl-L-citrulline. This is a step in an alternative arginine biosynthesis pathway. The enzyme has no activity with ornithine. This is N-acetylornithine carbamoyltransferase from Xanthomonas campestris pv. campestris (strain ATCC 33913 / DSM 3586 / NCPPB 528 / LMG 568 / P 25).